A 399-amino-acid polypeptide reads, in one-letter code: Acetate kinase (399 aa).

Asparagine 10 provides a ligand contact to Mg(2+). ATP is bound at residue lysine 17. Arginine 91 is a binding site for substrate. Aspartate 148 (proton donor/acceptor) is an active-site residue. Residues 208-212, 283-285, and 331-335 each bind ATP; these read HLGNG, DCR, and GIGEN. Glutamate 385 contributes to the Mg(2+) binding site.

Belongs to the acetokinase family. As to quaternary structure, homodimer. Requires Mg(2+) as cofactor. Mn(2+) is required as a cofactor.

The protein resides in the cytoplasm. It carries out the reaction acetate + ATP = acetyl phosphate + ADP. Its pathway is metabolic intermediate biosynthesis; acetyl-CoA biosynthesis; acetyl-CoA from acetate: step 1/2. Its function is as follows. Catalyzes the formation of acetyl phosphate from acetate and ATP. Can also catalyze the reverse reaction. The sequence is that of Acetate kinase from Shewanella oneidensis (strain ATCC 700550 / JCM 31522 / CIP 106686 / LMG 19005 / NCIMB 14063 / MR-1).